Consider the following 638-residue polypeptide: Probable glycerol-3-phosphate dehydrogenase, mitochondrial (638 aa).

100–128 is an FAD binding site; sequence DLIVIGGGATGTGVALDAQSRGMKVALFE.

The protein belongs to the FAD-dependent glycerol-3-phosphate dehydrogenase family. Requires FAD as cofactor.

Its subcellular location is the mitochondrion. The enzyme catalyses a quinone + sn-glycerol 3-phosphate = dihydroxyacetone phosphate + a quinol. The protein operates within polyol metabolism; glycerol degradation via glycerol kinase pathway; glycerone phosphate from sn-glycerol 3-phosphate (anaerobic route): step 1/1. In Dictyostelium discoideum (Social amoeba), this protein is Probable glycerol-3-phosphate dehydrogenase, mitochondrial.